A 149-amino-acid chain; its full sequence is Cytochrome c-type biogenesis protein CcmE (149 aa).

Residues 1–8 (MNPKRKQR) are Cytoplasmic-facing. The helical; Signal-anchor for type II membrane protein transmembrane segment at 9-29 (LIIVSFLVIGVSATVGLIMAA) threads the bilayer. Over 30–149 (LSSNVNHFYN…AQDAAPAQTY (120 aa)) the chain is Periplasmic. Residues His124 and Tyr128 each coordinate heme.

Belongs to the CcmE/CycJ family.

It is found in the cell inner membrane. Functionally, heme chaperone required for the biogenesis of c-type cytochromes. Transiently binds heme delivered by CcmC and transfers the heme to apo-cytochromes in a process facilitated by CcmF and CcmH. This is Cytochrome c-type biogenesis protein CcmE from Hahella chejuensis (strain KCTC 2396).